We begin with the raw amino-acid sequence, 364 residues long: C3a anaphylatoxin chemotactic receptor (364 aa).

Residues 1–50 are Extracellular-facing; the sequence is MGDNMDFSEHYGNFSENYVTESYGEFDLYYDPLNETSLSEQGHRSIWVLS. N-linked (GlcNAc...) asparagine glycosylation is found at Asn-13 and Asn-34. Residues 51–71 form a helical membrane-spanning segment; the sequence is IVLCSIACVLGITGNAFVIWI. Residues 72 to 82 lie on the Cytoplasmic side of the membrane; that stretch reads AGVKMKRTVNT. Residues 83–103 form a helical membrane-spanning segment; sequence IWFVNLAAADLLCCVSIPFSI. Residues 104-120 lie on the Extracellular side of the membrane; sequence ADIILNSHWPYGEAMCK. Residues Cys-119 and Cys-198 are joined by a disulfide bond. A helical membrane pass occupies residues 121 to 141; the sequence is ILPSMVVLNMFASVFTLVLIS. The Cytoplasmic portion of the chain corresponds to 142 to 159; sequence LDRFALVILPVWAQNHRS. A helical membrane pass occupies residues 160–180; that stretch reads ITLAWLLCGLVWVLGLLLSLP. Residues 181–220 are Extracellular-facing; the sequence is SMIYREIVVHDDMNITLCIYNHLQDKTEGNQSAIKAIHVT. Residues 221-241 form a helical membrane-spanning segment; sequence RLILGFLIPLLVIAVCYLLIG. At 242 to 256 the chain is on the cytoplasmic side; it reads RRVSSGRFKSQRAFQ. A helical transmembrane segment spans residues 257-277; sequence IILVVVTTFFVCWLPYHVIGL. Residues 278–295 lie on the Extracellular side of the membrane; the sequence is VIEYGKEASQVMARALDP. The chain crosses the membrane as a helical span at residues 296-316; that stretch reads LAISLAYVNSCLNPVLYVFMG. Over 317 to 364 the chain is Cytoplasmic; sequence QDFKERVRVSLRKIFEKVFSEDVTLRSSVYSKGQSQLSRATNSSEAQV.

Belongs to the G-protein coupled receptor 1 family.

The protein resides in the cell membrane. In terms of biological role, receptor for the chemotactic and inflammatory peptide anaphylatoxin C3a. This receptor stimulates chemotaxis, granule enzyme release and superoxide anion production. The sequence is that of C3a anaphylatoxin chemotactic receptor (c3ar1) from Oncorhynchus mykiss (Rainbow trout).